The primary structure comprises 180 residues: MIVYLHGFDSNSPGNHEKVLQLQFIDPDVRFISYSTLHPRHDMQHLLKEVDKAIQQGGDAKSLICGVGLGGFWAERIGFLCGIRQVAFNPNLYPQDNMSGKIDRPEEYVDIASKCISDFREKNRDRCLVVLSRNDEMLDSKRTAGDLHPYYEIVWDEKQGHKFKDLSPHLQRIKAFKTLG.

The protein belongs to the UPF0227 family.

This is UPF0227 protein YE1706 from Yersinia enterocolitica serotype O:8 / biotype 1B (strain NCTC 13174 / 8081).